Reading from the N-terminus, the 752-residue chain is Photosystem I P700 chlorophyll a apoprotein A1 (752 aa).

Transmembrane regions (helical) follow at residues 73–96 (IFSA…FHGA), 159–182 (LYVT…FHYH), 198–222 (LNHH…HVSA), 294–312 (IAHH…GHQY), 349–372 (WHAQ…HHMY), 388–414 (LCIF…IFMV), 436–458 (AIIS…LYIH), and 533–551 (FLIH…LILL). Residues C575 and C584 each contribute to the [4Fe-4S] cluster site. The next 2 membrane-spanning stretches (helical) occupy residues 591-612 (HVFL…HFSW) and 666-688 (LSAY…MFLF). H677 serves as a coordination point for chlorophyll a'. Residues M685 and Y693 each contribute to the chlorophyll a site. Position 694 (W694) interacts with phylloquinone. Residues 726–746 (AVGVAHYLLGGIATTWAFFHA) traverse the membrane as a helical segment.

It belongs to the PsaA/PsaB family. In terms of assembly, the PsaA/B heterodimer binds the P700 chlorophyll special pair and subsequent electron acceptors. PSI consists of a core antenna complex that captures photons, and an electron transfer chain that converts photonic excitation into a charge separation. The cyanobacterial PSI reaction center is composed of one copy each of PsaA,B,C,D,E,F,I,J,K,L,M and X, and forms trimeric complexes. Requires PSI electron transfer chain: 5 chlorophyll a, 1 chlorophyll a', 2 phylloquinones and 3 4Fe-4S clusters. PSI core antenna: 90 chlorophyll a, 22 carotenoids, 3 phospholipids and 1 galactolipid. P700 is a chlorophyll a/chlorophyll a' dimer, A0 is one or more chlorophyll a, A1 is one or both phylloquinones and FX is a shared 4Fe-4S iron-sulfur center. as cofactor.

The protein resides in the cellular thylakoid membrane. The catalysed reaction is reduced [plastocyanin] + hnu + oxidized [2Fe-2S]-[ferredoxin] = oxidized [plastocyanin] + reduced [2Fe-2S]-[ferredoxin]. Its function is as follows. PsaA and PsaB bind P700, the primary electron donor of photosystem I (PSI), as well as the electron acceptors A0, A1 and FX. PSI is a plastocyanin/cytochrome c6-ferredoxin oxidoreductase, converting photonic excitation into a charge separation, which transfers an electron from the donor P700 chlorophyll pair to the spectroscopically characterized acceptors A0, A1, FX, FA and FB in turn. Oxidized P700 is reduced on the lumenal side of the thylakoid membrane by plastocyanin or cytochrome c6. The protein is Photosystem I P700 chlorophyll a apoprotein A1 of Nostoc punctiforme (strain ATCC 29133 / PCC 73102).